Here is a 699-residue protein sequence, read N- to C-terminus: Elongation factor G (699 aa).

The tr-type G domain maps to 8–283; sequence EQIRNIGICA…AIVDFLPSPI (276 aa). Residues 17 to 24, 81 to 85, and 135 to 138 contribute to the GTP site; these read AHIDAGKT, DTPGH, and NKMD.

The protein belongs to the TRAFAC class translation factor GTPase superfamily. Classic translation factor GTPase family. EF-G/EF-2 subfamily.

The protein localises to the cytoplasm. Its function is as follows. Catalyzes the GTP-dependent ribosomal translocation step during translation elongation. During this step, the ribosome changes from the pre-translocational (PRE) to the post-translocational (POST) state as the newly formed A-site-bound peptidyl-tRNA and P-site-bound deacylated tRNA move to the P and E sites, respectively. Catalyzes the coordinated movement of the two tRNA molecules, the mRNA and conformational changes in the ribosome. The protein is Elongation factor G (fusA) of Rickettsia prowazekii (strain Madrid E).